The chain runs to 433 residues: Pectinesterase B (433 aa).

The first 21 residues, 1–21 (MSLTHYSGLAAAVSMSLILTA), serve as a signal peptide directing secretion. Residue C22 is the site of N-palmitoyl cysteine attachment. C22 carries S-diacylglycerol cysteine lipidation. The Periplasmic portion of the chain corresponds to 22-433 (CGGQTPNSAR…EYNTQVLLHE (412 aa)). 2 residues coordinate substrate: T202 and Q236. The active-site Proton donor is the D259. D292 acts as the Nucleophile in catalysis. Substrate is bound by residues R356 and W358.

The protein belongs to the pectinesterase family.

The protein resides in the cell outer membrane. It carries out the reaction [(1-&gt;4)-alpha-D-galacturonosyl methyl ester](n) + n H2O = [(1-&gt;4)-alpha-D-galacturonosyl](n) + n methanol + n H(+). It participates in glycan metabolism; pectin degradation; 2-dehydro-3-deoxy-D-gluconate from pectin: step 1/5. Probably involved in the degradation of methylated oligogalacturonides present in the periplasm. More active on methylated oligogalacturides than on pectin. This Dickeya dadantii (strain 3937) (Erwinia chrysanthemi (strain 3937)) protein is Pectinesterase B.